The primary structure comprises 441 residues: Transforming protein p54/c-ets-1 (441 aa).

The PNT domain occupies 51 to 136 (ATFSGFAKEQ…EHLEILQKEE (86 aa)). The segment at 130–243 (EILQKEEAKP…DNMCMGRASR (114 aa)) is activation domain; required for transcription activation. A helix HI-1 region spans residues 304–312 (FKDYVRDRA). The tract at residues 323–330 (AAALAGYT) is helix HI-2. A DNA-binding region (ETS) is located at residues 335–415 (IQLWQFLLEL…AGKRYVYRFV (81 aa)). Residues 418-422 (LQSLL) are helix H4. Residues 426–432 (PEELHAM) are helix H5.

This sequence belongs to the ETS family. In terms of assembly, binds DNA as a homodimer; homodimerization is required for transcription activation.

The protein resides in the nucleus. It localises to the cytoplasm. With respect to regulation, autoinhibited by a module composed of four alpha helices (HI-1, HI-2, H4, and H5) that flank the DNA-binding ETS domain, reducing the affinity for DNA. Functionally, transcription factor. Directly controls the expression of cytokine and chemokine genes in a wide variety of different cellular contexts. This chain is Transforming protein p54/c-ets-1 (ETS1), found in Gallus gallus (Chicken).